A 261-amino-acid polypeptide reads, in one-letter code: tRNA pseudouridine synthase A (261 aa).

The active-site Nucleophile is D51. Y109 is a substrate binding site.

This sequence belongs to the tRNA pseudouridine synthase TruA family. In terms of assembly, homodimer.

It catalyses the reaction uridine(38/39/40) in tRNA = pseudouridine(38/39/40) in tRNA. In terms of biological role, formation of pseudouridine at positions 38, 39 and 40 in the anticodon stem and loop of transfer RNAs. The sequence is that of tRNA pseudouridine synthase A from Methylobacillus flagellatus (strain ATCC 51484 / DSM 6875 / VKM B-1610 / KT).